We begin with the raw amino-acid sequence, 202 residues long: Outer-membrane lipoprotein carrier protein (202 aa).

Residues 1–21 (MKRLLVACCFLSGLISASALA) form the signal peptide.

Belongs to the LolA family. In terms of assembly, monomer.

The protein resides in the periplasm. Participates in the translocation of lipoproteins from the inner membrane to the outer membrane. Only forms a complex with a lipoprotein if the residue after the N-terminal Cys is not an aspartate (The Asp acts as a targeting signal to indicate that the lipoprotein should stay in the inner membrane). The chain is Outer-membrane lipoprotein carrier protein from Yersinia pestis bv. Antiqua (strain Antiqua).